The primary structure comprises 244 residues: Diablo homolog, mitochondrial (244 aa).

Residues 1 to 38 constitute a mitochondrion transit peptide; it reads MASLPRRLIWSFSYILRESFPIVSRRNCVSLLRASWRK. An IAP-binding motif is present at residues 50–54; that stretch reads AIPVG. The segment covering 207–218 has biased composition (basic and acidic residues); that stretch reads DEIKRTITEDKG. The tract at residues 207–244 is disordered; the sequence is DEIKRTITEDKGNPPSGGSPRSSLSEEEEIPEAYLRED. Residues 220–229 show a composition bias toward low complexity; the sequence is PPSGGSPRSS.

It belongs to the Smac/DIABLO protein family. As to quaternary structure, homodimer.

Its subcellular location is the mitochondrion. Promotes apoptosis. Acts by opposing the inhibitory activity of inhibitor of apoptosis proteins (IAP). This is Diablo homolog, mitochondrial from Xenopus tropicalis (Western clawed frog).